The chain runs to 257 residues: Imidazole glycerol phosphate synthase subunit HisF (257 aa).

Residues Asp12 and Asp131 contribute to the active site.

This sequence belongs to the HisA/HisF family. As to quaternary structure, heterodimer of HisH and HisF.

It localises to the cytoplasm. The enzyme catalyses 5-[(5-phospho-1-deoxy-D-ribulos-1-ylimino)methylamino]-1-(5-phospho-beta-D-ribosyl)imidazole-4-carboxamide + L-glutamine = D-erythro-1-(imidazol-4-yl)glycerol 3-phosphate + 5-amino-1-(5-phospho-beta-D-ribosyl)imidazole-4-carboxamide + L-glutamate + H(+). The protein operates within amino-acid biosynthesis; L-histidine biosynthesis; L-histidine from 5-phospho-alpha-D-ribose 1-diphosphate: step 5/9. Functionally, IGPS catalyzes the conversion of PRFAR and glutamine to IGP, AICAR and glutamate. The HisF subunit catalyzes the cyclization activity that produces IGP and AICAR from PRFAR using the ammonia provided by the HisH subunit. The sequence is that of Imidazole glycerol phosphate synthase subunit HisF from Kineococcus radiotolerans (strain ATCC BAA-149 / DSM 14245 / SRS30216).